The primary structure comprises 144 residues: Small ribosomal subunit protein uS9 (144 aa).

N-acetylthreonine is present on Thr-2. The segment at Arg-124 to Arg-144 is disordered.

Belongs to the universal ribosomal protein uS9 family.

The chain is Small ribosomal subunit protein uS9 (rps-16) from Caenorhabditis elegans.